A 249-amino-acid chain; its full sequence is Metallo-beta-lactamase type 2 (249 aa).

A signal peptide spans 1–22 (MMKKMKWALVLALGLTGLNAFG). Residues H98, H100, D102, H161, and C180 each coordinate Zn(2+). Residue K183 coordinates substrate. H222 is a Zn(2+) binding site.

It belongs to the metallo-beta-lactamase superfamily. Class-B beta-lactamase family. As to quaternary structure, monomer. Zn(2+) serves as cofactor.

The protein localises to the periplasm. The enzyme catalyses a beta-lactam + H2O = a substituted beta-amino acid. Confers resistance to the different beta-lactams antibiotics (penicillin, cephalosporin and carbapenem) via the hydrolysis of the beta-lactam ring. This is Metallo-beta-lactamase type 2 (blaB4) from Elizabethkingia meningoseptica (Chryseobacterium meningosepticum).